We begin with the raw amino-acid sequence, 505 residues long: MAIQAEEISALIKQQLEKFDTTLTVEEVGTVTYVGDGVARATGLANALAGELVEFANGTYGMAQNLESSEVGIIILGGFDDIREGDTVKRTGRIMEVPVGEQLIGRVVNALGQPIDGLGEIKTDKTRPVEVKAPGVMERKSVSEPLQTGIKAIDALVPIGRGQRELIIGDRKTGKTSLAIDTILNQKDQNMIVIYVAIGQKNSTVRAQVETLRQMGAMDYTIVVNAGPSEPAPMLYLAPYVGAAMGEEFMYNGKHVLIVYDDLSKQATAYRELSLILRRPPGREAYPGDVFYLHSRLLERAAKLSDELGGGSMTALPFIETQAGDVSAYIPTNVISITDGQVFLDADQFYAGVRPAIDAGTSVSRVGGDAQIKAMKKVAGTLRLDLASFRELESFAQFGSDLDSATQAKLARGRRTVEILKQPLNKPMPVQHQVVVLYALTHGYLDDVEVADIQRFQDELIAYVDANASELFKAIVETKNLPEEADLNAAIEAFKAGFAGSESAE.

169 to 176 serves as a coordination point for ATP; the sequence is GDRKTGKT.

Belongs to the ATPase alpha/beta chains family. As to quaternary structure, F-type ATPases have 2 components, CF(1) - the catalytic core - and CF(0) - the membrane proton channel. CF(1) has five subunits: alpha(3), beta(3), gamma(1), delta(1), epsilon(1). CF(0) has three main subunits: a(1), b(2) and c(9-12). The alpha and beta chains form an alternating ring which encloses part of the gamma chain. CF(1) is attached to CF(0) by a central stalk formed by the gamma and epsilon chains, while a peripheral stalk is formed by the delta and b chains.

The protein resides in the cell membrane. The enzyme catalyses ATP + H2O + 4 H(+)(in) = ADP + phosphate + 5 H(+)(out). Produces ATP from ADP in the presence of a proton gradient across the membrane. The alpha chain is a regulatory subunit. This Leuconostoc mesenteroides subsp. mesenteroides (strain ATCC 8293 / DSM 20343 / BCRC 11652 / CCM 1803 / JCM 6124 / NCDO 523 / NBRC 100496 / NCIMB 8023 / NCTC 12954 / NRRL B-1118 / 37Y) protein is ATP synthase subunit alpha.